The following is a 428-amino-acid chain: Transcription factor Sp7 (428 aa).

The disordered stretch occupies residues 30-84; it reads SSPLRDSTTLGKGGTKKPYADLSAPKTMGDAYPAPFSSTNGLLSPAGSPPAPASG. N6-propionyllysine is present on residues Lys41 and Lys45. A Glycyl lysine isopeptide (Lys-Gly) (interchain with G-Cter in ubiquitin) cross-link involves residue Lys55. The 9aaTAD motif lies at 153–161; it reads TPWWDMHPG. Residue Lys227 forms a Glycyl lysine isopeptide (Lys-Gly) (interchain with G-Cter in ubiquitin) linkage. The segment at 229–257 is disordered; that stretch reads KAVGNSGQLEGSGAAKPPRGAGTGGSGGY. C2H2-type zinc fingers lie at residues 291–315, 321–345, and 351–373; these read HSCH…LRWH, FVCN…VRTH, and FTCL…QRTH. Residues Lys358 and Lys368 each carry the N6-propionyllysine modification. A disordered region spans residues 364–428; the sequence is DHLSKHQRTH…SPEQSNLLEI (65 aa).

This sequence belongs to the Sp1 C2H2-type zinc-finger protein family. As to quaternary structure, interacts with RIOX1; the interaction is direct and inhibits transcription activator activity. Post-translationally, propionylated. Depropionylation at Lys-368 by SIRT7 activates transcription factor activity and positively regulates bone formation by osteoblasts. Ubiquitination at leads to proteasomal degradation. SP7 is a short-live protein with an endogenous half-life of approximately 12 hours. Osteoblast/chondrocyte specific.

The protein resides in the nucleus. Transcriptional activator essential for osteoblast differentiation. Binds to SP1 and EKLF consensus sequences and to other G/C-rich sequences. The chain is Transcription factor Sp7 (Sp7) from Mus musculus (Mouse).